Here is a 358-residue protein sequence, read N- to C-terminus: Guanidino acid hydrolase, mitochondrial (358 aa).

Residues 1-36 (MLRLLRSSWARGLGSGVATWRPSAGLFRPGCPGIRQ) constitute a mitochondrion transit peptide. The tract at residues 31–56 (CPGIRQASGASDTPHHQSPSSESPVQ) is disordered. Over residues 46–56 (HQSPSSESPVQ) the composition is skewed to low complexity. Mn(2+) contacts are provided by Q168 and H193. An N6-acetyllysine modification is found at K199. K223 bears the N6-acetyllysine; alternate mark. At K223 the chain carries N6-succinyllysine; alternate. Residue D284 participates in Mn(2+) binding.

The protein belongs to the arginase family. Agmatinase subfamily. Mn(2+) is required as a cofactor. In terms of tissue distribution, detected only in liver.

It is found in the mitochondrion. The catalysed reaction is 3-guanidinopropanoate + H2O = urea + beta-alanine. The enzyme catalyses 4-guanidinobutanoate + H2O = urea + 4-aminobutanoate. It carries out the reaction taurocyamine + H2O = urea + taurine. It catalyses the reaction L-arginine + H2O = urea + L-ornithine. The protein operates within nitrogen metabolism; urea cycle; L-ornithine and urea from L-arginine: step 1/1. Hydrolyzes linear guanidino acids to form urea and the corresponding amines. Displays specificity for substrates having a negatively charged head group and short chains including taurocyamine, guanidino propanoic and butanoic acids. May protect cells by detoxifying potentially harmful amounts of guanidino acids. Metabolizes L-arginine with low efficiency. This chain is Guanidino acid hydrolase, mitochondrial (Agmat), found in Mus musculus (Mouse).